The following is a 290-amino-acid chain: 33 kDa chaperonin (290 aa).

Disulfide bonds link cysteine 235/cysteine 237 and cysteine 268/cysteine 271.

This sequence belongs to the HSP33 family. Under oxidizing conditions two disulfide bonds are formed involving the reactive cysteines. Under reducing conditions zinc is bound to the reactive cysteines and the protein is inactive.

It is found in the cytoplasm. Redox regulated molecular chaperone. Protects both thermally unfolding and oxidatively damaged proteins from irreversible aggregation. Plays an important role in the bacterial defense system toward oxidative stress. The polypeptide is 33 kDa chaperonin (Streptococcus pyogenes serotype M1).